A 316-amino-acid chain; its full sequence is Lipoyl synthase (316 aa).

A compositionally biased stretch (basic and acidic residues) spans 1–19 (MRDLKIPEQRHPEKAHRPD). The interval 1-31 (MRDLKIPEQRHPEKAHRPDNAQPKKPSWIRV) is disordered. [4Fe-4S] cluster is bound by residues cysteine 55, cysteine 60, cysteine 66, cysteine 81, cysteine 85, cysteine 88, and serine 295. Positions 67-284 (WSQGHATMMI…EKAAYGKGFL (218 aa)) constitute a Radical SAM core domain.

It belongs to the radical SAM superfamily. Lipoyl synthase family. [4Fe-4S] cluster is required as a cofactor.

The protein localises to the cytoplasm. It catalyses the reaction [[Fe-S] cluster scaffold protein carrying a second [4Fe-4S](2+) cluster] + N(6)-octanoyl-L-lysyl-[protein] + 2 oxidized [2Fe-2S]-[ferredoxin] + 2 S-adenosyl-L-methionine + 4 H(+) = [[Fe-S] cluster scaffold protein] + N(6)-[(R)-dihydrolipoyl]-L-lysyl-[protein] + 4 Fe(3+) + 2 hydrogen sulfide + 2 5'-deoxyadenosine + 2 L-methionine + 2 reduced [2Fe-2S]-[ferredoxin]. It participates in protein modification; protein lipoylation via endogenous pathway; protein N(6)-(lipoyl)lysine from octanoyl-[acyl-carrier-protein]: step 2/2. Catalyzes the radical-mediated insertion of two sulfur atoms into the C-6 and C-8 positions of the octanoyl moiety bound to the lipoyl domains of lipoate-dependent enzymes, thereby converting the octanoylated domains into lipoylated derivatives. The sequence is that of Lipoyl synthase from Ruegeria sp. (strain TM1040) (Silicibacter sp.).